The following is a 313-amino-acid chain: uncharacterized protein (313 aa).

A29–D61 is a binding site for NADP(+).

It belongs to the short-chain dehydrogenases/reductases (SDR) family. 2,4-dienoyl-CoA reductase subfamily.

This is an uncharacterized protein from Caenorhabditis elegans.